The following is a 570-amino-acid chain: MPVTMSRRAYAGMFGPTTGDKIRLADTELLIEVERDFTIYGEEVKFGGGKVIRDGMGQSQRSRAEGAVDTLITNVVILDHTGVVKADVGLKDGRIAAIGKGGNPDIQPGVTITIGPGTEIIAGEGKILTAGGVDTHIHFIAPQQIEEALCSGVTTMLGGGSGPAEGTKATTCTSGPWHMMRMMQAAESLPMNIGFFGKGNASKPAALIEMVEAGACGLKLHEDWGTTPAAIDCCLSVCDALDVQATLHSDTLNESGFVETTIAAFKGRTIHAFHTEGAGGGHAPDIIKVVGEQNVLPSSTNPTRPFTRNTLDEHLDMLMVCHHLDPHIAEDIAFAESRIRKETIAAEDILHDLGALSMFSSDSQAMGRVGEVVIRCWQTADKMKRQRGALPEDISGNDNFRARRYIAKYTINPAIAHGISHVVGSVEPGKLADLVLWSPAFFGVKPDLVLKGGSIAYALMGDANASIPTPQPVHYRPMFASFGRSLIESSLIFVSAVSIERGVGARYGLSRPLEAVRGTRGSISKKSMILNDATPVMEVDPETYEVRADGELLTCEPADVLPMAQRYFLF.

Residues 131 to 570 (GGVDTHIHFI…LPMAQRYFLF (440 aa)) enclose the Urease domain. Positions 136, 138, and 219 each coordinate Ni(2+). Residue Lys219 is modified to N6-carboxylysine. A substrate-binding site is contributed by His221. 2 residues coordinate Ni(2+): His248 and His274. The active-site Proton donor is His322. Ni(2+) is bound at residue Asp362.

Belongs to the metallo-dependent hydrolases superfamily. Urease alpha subunit family. Heterotrimer of UreA (gamma), UreB (beta) and UreC (alpha) subunits. Three heterotrimers associate to form the active enzyme. Requires Ni cation as cofactor. Carboxylation allows a single lysine to coordinate two nickel ions.

It localises to the cytoplasm. The enzyme catalyses urea + 2 H2O + H(+) = hydrogencarbonate + 2 NH4(+). Its pathway is nitrogen metabolism; urea degradation; CO(2) and NH(3) from urea (urease route): step 1/1. The sequence is that of Urease subunit alpha from Methylocella silvestris (strain DSM 15510 / CIP 108128 / LMG 27833 / NCIMB 13906 / BL2).